The primary structure comprises 104 residues: Large ribosomal subunit protein uL24 (104 aa).

This sequence belongs to the universal ribosomal protein uL24 family. As to quaternary structure, part of the 50S ribosomal subunit.

One of two assembly initiator proteins, it binds directly to the 5'-end of the 23S rRNA, where it nucleates assembly of the 50S subunit. Functionally, one of the proteins that surrounds the polypeptide exit tunnel on the outside of the subunit. The protein is Large ribosomal subunit protein uL24 of Flavobacterium psychrophilum (strain ATCC 49511 / DSM 21280 / CIP 103535 / JIP02/86).